Consider the following 90-residue polypeptide: Evasin P1128 (90 aa).

Positions 1-18 (MFIALGIQLFVAVTYAAG) are cleaved as a signal peptide. Disulfide bonds link cysteine 29–cysteine 51, cysteine 33–cysteine 53, and cysteine 44–cysteine 64. An N-linked (GlcNAc...) asparagine glycan is attached at asparagine 32.

Its subcellular location is the secreted. Salivary chemokine-binding protein which binds to host chemokines CXCL1, CXCL2, CXCL3, CXCL5 and CXCL8. This Ixodes ricinus (Common tick) protein is Evasin P1128.